Consider the following 377-residue polypeptide: Flagellin D (377 aa).

Coiled coils occupy residues 103–129 and 310–339; these read SNSKSERVAIQEEITALNDELNRIAET and AFQNRFNHAISNLDNINENVNASKSRIKDT.

Belongs to the bacterial flagellin family. Heteromer of multiple flagellin subunits including FlaA, FlaB, FlaC, FlaD and FlaE.

Its subcellular location is the secreted. The protein resides in the bacterial flagellum. In terms of biological role, flagellin is the subunit protein which polymerizes to form the filaments of bacterial flagella. FlaD is not essential for flagellar synthesis and motility. This Vibrio cholerae serotype O1 (strain ATCC 39315 / El Tor Inaba N16961) protein is Flagellin D (flaD).